We begin with the raw amino-acid sequence, 31 residues long: Toxin BmKK16 (31 aa).

Glutamine 1 bears the Pyrrolidone carboxylic acid mark. Cystine bridges form between cysteine 4–cysteine 20, cysteine 10–cysteine 25, and cysteine 14–cysteine 27. Proline 31 carries the post-translational modification Proline amide.

This sequence belongs to the short scorpion toxin superfamily. Potassium channel inhibitor family. Alpha-KTx 17 subfamily. In terms of processing, the N-terminus is blocked. As to expression, expressed by the venom gland.

It is found in the secreted. Functionally, blocker of potassium channels (Kv). This Olivierus martensii (Manchurian scorpion) protein is Toxin BmKK16.